We begin with the raw amino-acid sequence, 101 residues long: Protein translation factor SUI1 homolog (101 aa).

It belongs to the SUI1 family.

The polypeptide is Protein translation factor SUI1 homolog (Methanothermobacter thermautotrophicus (strain ATCC 29096 / DSM 1053 / JCM 10044 / NBRC 100330 / Delta H) (Methanobacterium thermoautotrophicum)).